The chain runs to 359 residues: Peptide chain release factor 1 (359 aa).

Position 235 is an N5-methylglutamine (Gln235). The disordered stretch occupies residues 287-312 (AQEASAMRSAQVGSGDRSERIRTYNF).

It belongs to the prokaryotic/mitochondrial release factor family. Post-translationally, methylated by PrmC. Methylation increases the termination efficiency of RF1.

It localises to the cytoplasm. In terms of biological role, peptide chain release factor 1 directs the termination of translation in response to the peptide chain termination codons UAG and UAA. The chain is Peptide chain release factor 1 from Chlamydia trachomatis serovar A (strain ATCC VR-571B / DSM 19440 / HAR-13).